Reading from the N-terminus, the 249-residue chain is Aspartate/glutamate leucyltransferase (249 aa).

This sequence belongs to the R-transferase family. Bpt subfamily.

The protein localises to the cytoplasm. It carries out the reaction N-terminal L-glutamyl-[protein] + L-leucyl-tRNA(Leu) = N-terminal L-leucyl-L-glutamyl-[protein] + tRNA(Leu) + H(+). It catalyses the reaction N-terminal L-aspartyl-[protein] + L-leucyl-tRNA(Leu) = N-terminal L-leucyl-L-aspartyl-[protein] + tRNA(Leu) + H(+). Functionally, functions in the N-end rule pathway of protein degradation where it conjugates Leu from its aminoacyl-tRNA to the N-termini of proteins containing an N-terminal aspartate or glutamate. This chain is Aspartate/glutamate leucyltransferase, found in Azorhizobium caulinodans (strain ATCC 43989 / DSM 5975 / JCM 20966 / LMG 6465 / NBRC 14845 / NCIMB 13405 / ORS 571).